Here is a 523-residue protein sequence, read N- to C-terminus: Glucose-1-phosphate adenylyltransferase large subunit 1, chloroplastic/amyloplastic (523 aa).

The N-terminal 49 residues, 1–49 (MSSMQFSSVLPLEGKACVSPVRREGSACERLKIGDSSSIRHERASRRMC), are a transit peptide targeting the chloroplast.

It belongs to the bacterial/plant glucose-1-phosphate adenylyltransferase family. As to quaternary structure, heterotetramer. As to expression, starchy endosperm and roots.

The protein localises to the plastid. The protein resides in the chloroplast. It is found in the amyloplast. The enzyme catalyses alpha-D-glucose 1-phosphate + ATP + H(+) = ADP-alpha-D-glucose + diphosphate. The protein operates within glycan biosynthesis; starch biosynthesis. Its activity is regulated as follows. Highly active without 3'phosphoglycerate, and is only slightly affected by the activator 3'phosphoglycerate and inhibitor orthophosphate. In terms of biological role, this protein plays a role in synthesis of starch. It catalyzes the synthesis of the activated glycosyl donor, ADP-glucose from Glc-1-P and ATP. This is Glucose-1-phosphate adenylyltransferase large subunit 1, chloroplastic/amyloplastic from Hordeum vulgare (Barley).